A 459-amino-acid chain; its full sequence is Cysteine--tRNA ligase (459 aa).

Cysteine 29 serves as a coordination point for Zn(2+). Positions 31–41 (PTVYNLVHIGN) match the 'HIGH' region motif. Residues cysteine 209, histidine 234, and glutamate 238 each coordinate Zn(2+). Positions 267–271 (KMSKS) match the 'KMSKS' region motif. An ATP-binding site is contributed by lysine 270.

This sequence belongs to the class-I aminoacyl-tRNA synthetase family. As to quaternary structure, monomer. Zn(2+) is required as a cofactor.

The protein resides in the cytoplasm. It carries out the reaction tRNA(Cys) + L-cysteine + ATP = L-cysteinyl-tRNA(Cys) + AMP + diphosphate. The polypeptide is Cysteine--tRNA ligase (Saccharophagus degradans (strain 2-40 / ATCC 43961 / DSM 17024)).